Here is a 187-residue protein sequence, read N- to C-terminus: Cerebral dopamine neurotrophic factor (187 aa).

The N-terminal stretch at 1 to 24 (MRCISPTALVTFCAGFCISNPVLA) is a signal peptide. Disulfide bonds link Cys-37/Cys-124, Cys-40/Cys-113, and Cys-71/Cys-82.

The protein belongs to the ARMET family. As to expression, expressed at high levels in the heart, skeletal muscle, testis and brain (at protein level). In the brain, detected in the cerebral cortex neurons through layers II to VI. In the hippocampus, detected in the CA1 to CA3 pyramidal regions and in the granule and polymorph layers of dentate gyrus. Weak expression in the striatum. In substantia nigra, detected in solitary cells that did not express tyrosine hydroxylase, a marker for dopaminergic neurons. Relatively high expression in the Purkinje cells of the cerebellum and in regions of the brain stem, including the locus coeruleus.

Its subcellular location is the secreted. Trophic factor for dopamine neurons. Prevents the 6-hydroxydopamine (6-OHDA)-induced degeneration of dopaminergic neurons. When administered after 6-OHDA-lesioning, restores the dopaminergic function and prevents the degeneration of dopaminergic neurons in substantia nigra. The sequence is that of Cerebral dopamine neurotrophic factor (Cdnf) from Mus musculus (Mouse).